The chain runs to 211 residues: Small ribosomal subunit protein uS5 (211 aa).

The tract at residues 1–41 (MPGRERRDGGRSADDNKQNDRNERRGGGRRDDRRNQQQDER) is disordered. Positions 44–107 (YIERVVTINR…EEARKNFFRV (64 aa)) constitute an S5 DRBM domain.

This sequence belongs to the universal ribosomal protein uS5 family. In terms of assembly, part of the 30S ribosomal subunit. Contacts proteins S4 and S8.

In terms of biological role, with S4 and S12 plays an important role in translational accuracy. Located at the back of the 30S subunit body where it stabilizes the conformation of the head with respect to the body. The chain is Small ribosomal subunit protein uS5 from Corynebacterium glutamicum (strain R).